The sequence spans 165 residues: Putative pre-16S rRNA nuclease (165 aa).

Belongs to the YqgF nuclease family.

It is found in the cytoplasm. In terms of biological role, could be a nuclease involved in processing of the 5'-end of pre-16S rRNA. The chain is Putative pre-16S rRNA nuclease from Sinorhizobium medicae (strain WSM419) (Ensifer medicae).